We begin with the raw amino-acid sequence, 255 residues long: Aliphatic sulfonates import ATP-binding protein SsuB (255 aa).

The ABC transporter domain maps to 12–233 (LLLNAVSKHY…RLGSVRLAEL (222 aa)). 44 to 51 (GRSGGGKS) lines the ATP pocket.

It belongs to the ABC transporter superfamily. Aliphatic sulfonates importer (TC 3.A.1.17.2) family. In terms of assembly, the complex is composed of two ATP-binding proteins (SsuB), two transmembrane proteins (SsuC) and a solute-binding protein (SsuA).

It is found in the cell inner membrane. The enzyme catalyses ATP + H2O + aliphatic sulfonate-[sulfonate-binding protein]Side 1 = ADP + phosphate + aliphatic sulfonateSide 2 + [sulfonate-binding protein]Side 1.. In terms of biological role, part of the ABC transporter complex SsuABC involved in aliphatic sulfonates import. Responsible for energy coupling to the transport system. The protein is Aliphatic sulfonates import ATP-binding protein SsuB of Shigella flexneri serotype 5b (strain 8401).